The chain runs to 155 residues: MLKQVEIFTDGSCLGNPGPGGYGAIMRYRQHEKTFSAGYRLTTNNRMELMAAIVALEALKEHCEVVLSTDSQYVRQGITQWIHNWKKRGWKTAEKKPVKNVDLWQRLDAALGQHKIKWEWVKGHAGHPENERCDELARAAASHPTLDDVGYLPES.

In terms of domain architecture, RNase H type-1 spans 1 to 142 (MLKQVEIFTD…CDELARAAAS (142 aa)). Asp-10, Glu-48, Asp-70, and Asp-134 together coordinate Mg(2+).

Belongs to the RNase H family. As to quaternary structure, monomer. Mg(2+) is required as a cofactor.

Its subcellular location is the cytoplasm. It catalyses the reaction Endonucleolytic cleavage to 5'-phosphomonoester.. In terms of biological role, endonuclease that specifically degrades the RNA of RNA-DNA hybrids. The chain is Ribonuclease H from Klebsiella pneumoniae subsp. pneumoniae (strain ATCC 700721 / MGH 78578).